The primary structure comprises 335 residues: Mitochondrial thiamine diphosphate carrier 1 (335 aa).

Helical transmembrane passes span 13–29 (KRAVIDASAGGVAGAIS), 88–105 (VPALLMVVPYTSIQFAVL), 127–150 (YLSYISGALAGCAATVGSYPFDLL), 182–199 (LYAGLSPTLIEIIPYAGL), 231–247 (SLSSFQLFLCGLASGTV), and 304–323 (GIVPSTIKAAPAGAVTFVAY). Solcar repeat units follow at residues 13–111 (KRAV…VKSF), 124–210 (LSPY…FKRW), and 232–329 (LSSF…ASDW).

Belongs to the mitochondrial carrier (TC 2.A.29) family.

The protein localises to the mitochondrion inner membrane. Mitochondrial transporter that mediates uptake of thiamine diphosphate (ThDP) into mitochondria. This is Mitochondrial thiamine diphosphate carrier 1 from Arabidopsis thaliana (Mouse-ear cress).